We begin with the raw amino-acid sequence, 207 residues long: 3-isopropylmalate dehydratase small subunit (207 aa).

Belongs to the LeuD family. LeuD type 1 subfamily. As to quaternary structure, heterodimer of LeuC and LeuD.

The catalysed reaction is (2R,3S)-3-isopropylmalate = (2S)-2-isopropylmalate. Its pathway is amino-acid biosynthesis; L-leucine biosynthesis; L-leucine from 3-methyl-2-oxobutanoate: step 2/4. Catalyzes the isomerization between 2-isopropylmalate and 3-isopropylmalate, via the formation of 2-isopropylmaleate. This is 3-isopropylmalate dehydratase small subunit (leuD) from Buchnera aphidicola subsp. Rhopalosiphum padi.